The chain runs to 189 residues: Protein seele (189 aa).

A signal peptide spans 1 to 17 (MLTKALILFGLLALAQG). The 154-residue stretch at 23–176 (REVKCHVCKA…EQASYCDESP (154 aa)) folds into the Saposin B-type domain. 3 disulfide bridges follow: C27–C172, C30–C165, and C85–C136. Residues 186–189 (KEEL) carry the Prevents secretion from ER motif.

Belongs to the canopy family.

Its subcellular location is the endoplasmic reticulum. Its function is as follows. Involved in embryonic dorsal-ventral patterning which is generated by a series of serine protease processing events where gd processes snk which cleaves ea which then processes spz into the activating ligand for the Toll receptor. Required during this process for the secretion of ea from the developing embryo into the perivitelline space and for ea processing. The polypeptide is Protein seele (Drosophila melanogaster (Fruit fly)).